Reading from the N-terminus, the 322-residue chain is Phosphatidylserine decarboxylase proenzyme (322 aa).

Catalysis depends on charge relay system; for autoendoproteolytic cleavage activity residues aspartate 90, histidine 147, and serine 254. Serine 254 serves as the catalytic Schiff-base intermediate with substrate; via pyruvic acid; for decarboxylase activity. At serine 254 the chain carries Pyruvic acid (Ser); by autocatalysis. The segment at 296–322 is disordered; the sequence is EPAPLPAEEIKAEHDASPLVDNKKDDT. A compositionally biased stretch (basic and acidic residues) spans 303–322; sequence EEIKAEHDASPLVDNKKDDT.

It belongs to the phosphatidylserine decarboxylase family. PSD-B subfamily. Prokaryotic type I sub-subfamily. In terms of assembly, heterodimer of a large membrane-associated beta subunit and a small pyruvoyl-containing alpha subunit. Requires pyruvate as cofactor. Is synthesized initially as an inactive proenzyme. Formation of the active enzyme involves a self-maturation process in which the active site pyruvoyl group is generated from an internal serine residue via an autocatalytic post-translational modification. Two non-identical subunits are generated from the proenzyme in this reaction, and the pyruvate is formed at the N-terminus of the alpha chain, which is derived from the carboxyl end of the proenzyme. The autoendoproteolytic cleavage occurs by a canonical serine protease mechanism, in which the side chain hydroxyl group of the serine supplies its oxygen atom to form the C-terminus of the beta chain, while the remainder of the serine residue undergoes an oxidative deamination to produce ammonia and the pyruvoyl prosthetic group on the alpha chain. During this reaction, the Ser that is part of the protease active site of the proenzyme becomes the pyruvoyl prosthetic group, which constitutes an essential element of the active site of the mature decarboxylase.

The protein resides in the cell membrane. It carries out the reaction a 1,2-diacyl-sn-glycero-3-phospho-L-serine + H(+) = a 1,2-diacyl-sn-glycero-3-phosphoethanolamine + CO2. The protein operates within phospholipid metabolism; phosphatidylethanolamine biosynthesis; phosphatidylethanolamine from CDP-diacylglycerol: step 2/2. In terms of biological role, catalyzes the formation of phosphatidylethanolamine (PtdEtn) from phosphatidylserine (PtdSer). In Salmonella dublin (strain CT_02021853), this protein is Phosphatidylserine decarboxylase proenzyme.